Consider the following 81-residue polypeptide: Beta-defensin 34 (81 aa).

Positions 1–20 (MKTFLFLFAVLFFWSQPRMH) are cleaved as a signal peptide. Disulfide bonds link Cys-28–Cys-55, Cys-35–Cys-49, and Cys-39–Cys-56. Residues 62-72 (CGRSKGNQSDE) are compositionally biased toward polar residues. Positions 62–81 (CGRSKGNQSDEGSGHMGTRG) are disordered.

This sequence belongs to the beta-defensin family. Only expressed in epididymis (caput, corpus and cauda).

The protein localises to the secreted. Has antibacterial activity. The polypeptide is Beta-defensin 34 (Defb34) (Mus musculus (Mouse)).